A 366-amino-acid chain; its full sequence is ALFGTKDTTTAHSDYEIILEGGSSSWGQVKGRAKVNVPAAIPLLPTDCNIRIDAKPLDAQKGVVRFTTKIESVVDSVKNTLNVEVDIANETKDRRIAVGEGSLSVGDFSHSFSFEGQVVNMYYYRSDAVRRNIPNPIYMQGRQFHDILMKVPLDNNDLVDTWEGFQQSISGGGANFGDWIREFWFIGPAFAAINEGGQRISPIVVNSSNVEGGEKGPVGVTRWKFSHAGSGVVDSISRWTELFPVEQLNKPASIEGGFRSDSQGIEVKVDGNLPGVSRDAGGGLRRILNHPLIPLVHHGMVGKFNDFTVDTQLKIVLPKGYKIRYAAPQFRSQNLEEYRWSGGAYARWVEHVCKGGTGQFEVLYAQ.

Bacteriochlorophyll a is bound by residues His110, His145, His290, His297, and His298.

Homotrimer. Each subunit contains 7 molecules of bacteriochlorophyll a.

Its function is as follows. Intermediary in the transfer of excitation energy from the chlorophyll to the reaction centers. The polypeptide is Bacteriochlorophyll a protein (Prosthecochloris aestuarii).